The following is a 510-amino-acid chain: ATP synthase subunit alpha (510 aa).

Residue 169 to 176 coordinates ATP; the sequence is GDRQTGKT.

It belongs to the ATPase alpha/beta chains family. As to quaternary structure, F-type ATPases have 2 components, CF(1) - the catalytic core - and CF(0) - the membrane proton channel. CF(1) has five subunits: alpha(3), beta(3), gamma(1), delta(1), epsilon(1). CF(0) has three main subunits: a(1), b(2) and c(9-12). The alpha and beta chains form an alternating ring which encloses part of the gamma chain. CF(1) is attached to CF(0) by a central stalk formed by the gamma and epsilon chains, while a peripheral stalk is formed by the delta and b chains.

The protein localises to the cell membrane. The catalysed reaction is ATP + H2O + 4 H(+)(in) = ADP + phosphate + 5 H(+)(out). Produces ATP from ADP in the presence of a proton gradient across the membrane. The alpha chain is a regulatory subunit. The protein is ATP synthase subunit alpha of Thermomicrobium roseum (strain ATCC 27502 / DSM 5159 / P-2).